A 364-amino-acid chain; its full sequence is Aminomethyltransferase (364 aa).

Belongs to the GcvT family. In terms of assembly, the glycine cleavage system is composed of four proteins: P, T, L and H.

The enzyme catalyses N(6)-[(R)-S(8)-aminomethyldihydrolipoyl]-L-lysyl-[protein] + (6S)-5,6,7,8-tetrahydrofolate = N(6)-[(R)-dihydrolipoyl]-L-lysyl-[protein] + (6R)-5,10-methylene-5,6,7,8-tetrahydrofolate + NH4(+). In terms of biological role, the glycine cleavage system catalyzes the degradation of glycine. The protein is Aminomethyltransferase of Shewanella oneidensis (strain ATCC 700550 / JCM 31522 / CIP 106686 / LMG 19005 / NCIMB 14063 / MR-1).